The sequence spans 156 residues: Small ribosomal subunit protein uS7 (156 aa).

The protein belongs to the universal ribosomal protein uS7 family. As to quaternary structure, part of the 30S ribosomal subunit. Contacts proteins S9 and S11.

Its function is as follows. One of the primary rRNA binding proteins, it binds directly to 16S rRNA where it nucleates assembly of the head domain of the 30S subunit. Is located at the subunit interface close to the decoding center, probably blocks exit of the E-site tRNA. The protein is Small ribosomal subunit protein uS7 of Trichlorobacter lovleyi (strain ATCC BAA-1151 / DSM 17278 / SZ) (Geobacter lovleyi).